The chain runs to 880 residues: Valine--tRNA ligase (880 aa).

The 'HIGH' region signature appears at 49-59; the sequence is PNVTGKLHLGH. The 'KMSKS' region motif lies at 525-529; it reads KMSKS. Lysine 528 contributes to the ATP binding site. A coiled-coil region spans residues 809–880; the sequence is LEGLINIEEE…VKARLAELKR (72 aa).

This sequence belongs to the class-I aminoacyl-tRNA synthetase family. ValS type 1 subfamily. In terms of assembly, monomer.

It localises to the cytoplasm. It carries out the reaction tRNA(Val) + L-valine + ATP = L-valyl-tRNA(Val) + AMP + diphosphate. Its function is as follows. Catalyzes the attachment of valine to tRNA(Val). As ValRS can inadvertently accommodate and process structurally similar amino acids such as threonine, to avoid such errors, it has a 'posttransfer' editing activity that hydrolyzes mischarged Thr-tRNA(Val) in a tRNA-dependent manner. This Geobacillus stearothermophilus (Bacillus stearothermophilus) protein is Valine--tRNA ligase (valS).